A 1194-amino-acid polypeptide reads, in one-letter code: Immunoglobulin superfamily member 3 (1194 aa).

Residues 1 to 19 (MKCFFPVLSCLAVLGVVSA) form the signal peptide. 8 Ig-like C2-type domains span residues 20 to 138 (QRQV…AKMN), 143 to 262 (PDSL…WYAM), 276 to 386 (PTDK…KTVT), 401 to 539 (PIVV…VSIT), 545 to 661 (FAVT…WTRL), 676 to 803 (PVTK…EEVS), 813 to 945 (PDSR…TAVT), and 949 to 1097 (PDAA…YRLT). Residues 20 to 1124 (QRQVTVQEGP…LQSLICSNDA (1105 aa)) lie on the Extracellular side of the membrane. 2 disulfide bridges follow: cysteine 42/cysteine 120 and cysteine 167/cysteine 246. N-linked (GlcNAc...) asparagine glycosylation is present at asparagine 43. Residues 250–252 (EWI) carry the EWI motif motif. Cysteine 302 and cysteine 376 are disulfide-bonded. N-linked (GlcNAc...) asparagine glycosylation is present at asparagine 418. Cystine bridges form between cysteine 432-cysteine 511, cysteine 566-cysteine 645, cysteine 701-cysteine 782, cysteine 838-cysteine 918, and cysteine 974-cysteine 1080. N-linked (GlcNAc...) asparagine glycosylation is present at asparagine 842. The disordered stretch occupies residues 997–1030 (GGGKRGSLGIDEQEEEEEEEDISQEEDSEDPTER). The segment covering 1007–1026 (DEQEEEEEEEDISQEEDSED) has biased composition (acidic residues). Asparagine 1077 is a glycosylation site (N-linked (GlcNAc...) asparagine). The chain crosses the membrane as a helical span at residues 1125-1145 (LFYFVFFYPFPIFGILIITIL). At 1146-1194 (LVRFKSRNSSKNSEGKNGVPLLWIKEPHLNYSPTCLEPPVLSIHPGAID) the chain is on the cytoplasmic side.

Expressed in the lacrimal duct and lacrimal gland.

Its subcellular location is the membrane. In Mus musculus (Mouse), this protein is Immunoglobulin superfamily member 3 (Igsf3).